The primary structure comprises 656 residues: Nexilin (656 aa).

3 disordered regions span residues 1-131, 165-198, and 215-284; these read MNDV…IEQD, RAAA…EEEC, and TEAK…VFKE. Positions 11–26 are enriched in low complexity; that stretch reads LLSSSKPVPKSYVPKL. A compositionally biased stretch (basic and acidic residues) spans 27–78; that stretch reads GKGDVKDKFEAMQRAREERNQRRSRDEKQRRKEQYIREREWNRRKQEIKDML. At Ser-80 the chain carries Phosphoserine. 3 stretches are compositionally biased toward basic and acidic residues: residues 103–131, 169–198, and 216–269; these read GKFD…IEQD, NRKD…EEEC, and EAKK…RNMV. Residues Ser-221, Ser-330, Ser-337, and Ser-345 each carry the phosphoserine modification. Thr-350 is subject to Phosphothreonine. Disordered regions lie at residues 468-492 and 529-564; these read NFHE…HKVN and AALQ…APWF. A phosphoserine mark is found at Ser-544 and Ser-549. Thr-551 carries the phosphothreonine modification. The Ig-like domain maps to 562 to 650; the sequence is PWFKKPLRNT…GSAASTCILT (89 aa).

Interacts with F-actin. As to expression, expressed in brain, testis, spleen and fibroblasts (at protein level). Not detected in liver, kidney or epithelial cells (at protein level).

The protein localises to the cytoplasm. The protein resides in the cytoskeleton. It localises to the cell junction. It is found in the adherens junction. Its subcellular location is the myofibril. The protein localises to the sarcomere. The protein resides in the z line. Functionally, involved in regulating cell migration through association with the actin cytoskeleton. Has an essential role in the maintenance of Z line and sarcomere integrity. The chain is Nexilin from Rattus norvegicus (Rat).